The chain runs to 147 residues: Hemoglobin subunit beta-1 (147 aa).

Residues 3–147 (HWTDFERSTI…VVFSLGKQYH (145 aa)) enclose the Globin domain. Residues His64 and His93 each coordinate heme b.

The protein belongs to the globin family. As to quaternary structure, hb1 is a heterotetramer of two alpha-1 chains and two beta-1 chains. As to expression, red blood cells.

Involved in oxygen transport from gills to the various peripheral tissues. The sequence is that of Hemoglobin subunit beta-1 from Liparis tunicatus (Kelp snailfish).